A 236-amino-acid chain; its full sequence is tRNA1(Val) (adenine(37)-N6)-methyltransferase (236 aa).

The protein belongs to the methyltransferase superfamily. tRNA (adenine-N(6)-)-methyltransferase family.

The protein localises to the cytoplasm. It catalyses the reaction adenosine(37) in tRNA1(Val) + S-adenosyl-L-methionine = N(6)-methyladenosine(37) in tRNA1(Val) + S-adenosyl-L-homocysteine + H(+). Its function is as follows. Specifically methylates the adenine in position 37 of tRNA(1)(Val) (anticodon cmo5UAC). This Histophilus somni (strain 129Pt) (Haemophilus somnus) protein is tRNA1(Val) (adenine(37)-N6)-methyltransferase.